The primary structure comprises 60 residues: Large ribosomal subunit protein bL32 (60 aa).

The protein belongs to the bacterial ribosomal protein bL32 family.

In Ruminiclostridium cellulolyticum (strain ATCC 35319 / DSM 5812 / JCM 6584 / H10) (Clostridium cellulolyticum), this protein is Large ribosomal subunit protein bL32.